The following is a 404-amino-acid chain: Tryptophan synthase beta chain (404 aa).

The residue at position 98 (K98) is an N6-(pyridoxal phosphate)lysine.

This sequence belongs to the TrpB family. In terms of assembly, tetramer of two alpha and two beta chains. Pyridoxal 5'-phosphate serves as cofactor.

The catalysed reaction is (1S,2R)-1-C-(indol-3-yl)glycerol 3-phosphate + L-serine = D-glyceraldehyde 3-phosphate + L-tryptophan + H2O. Its pathway is amino-acid biosynthesis; L-tryptophan biosynthesis; L-tryptophan from chorismate: step 5/5. Its function is as follows. The beta subunit is responsible for the synthesis of L-tryptophan from indole and L-serine. This Rhodopseudomonas palustris (strain ATCC BAA-98 / CGA009) protein is Tryptophan synthase beta chain.